We begin with the raw amino-acid sequence, 137 residues long: Glutaredoxin-C9 (137 aa).

The region spanning 32–136 (GERVRMVVEE…PILKEVGALW (105 aa)) is the Glutaredoxin domain. Cys52 and Cys55 are oxidised to a cystine. The Responsive for interaction with TGA factors motif lies at 134–137 (ALWL).

Belongs to the glutaredoxin family. CC-type subfamily. In terms of assembly, interacts with TGA2 and TGA6.

The protein resides in the cytoplasm. It is found in the nucleus. Its function is as follows. Has a glutathione-disulfide oxidoreductase activity in the presence of NADPH and glutathione reductase. Reduces low molecular weight disulfides and proteins. The chain is Glutaredoxin-C9 (GRXC9) from Arabidopsis thaliana (Mouse-ear cress).